A 220-amino-acid chain; its full sequence is HTH-type transcriptional repressor GlaR (220 aa).

The HTH gntR-type domain maps to 1–69; it reads MTITSLDGYR…NQKGYRVASM (69 aa). Positions 29 to 48 form a DNA-binding region, H-T-H motif; sequence MSLLTSRYALGVGPLREALS.

The protein localises to the cytoplasm. With respect to regulation, the repressive effect at the glaH promoter site is specifically relieved upon glutarate binding. Its function is as follows. Negatively regulates the expression of the glaH-lhgD-gabDTP operon in a temporal manner during entry into stationary phase or during the first few hours of carbon starvation. Thereby is involved in the regulation of a L-lysine degradation pathway that proceeds via cadaverine, glutarate and L-2-hydroxyglutarate. Binds to two primary and two secondary sites in the promoter region of the glaH operon with the consensus sequences TTGTN5TTTT and ATGTN5TTTT of the primary sites, each separated by six nucleotides. This chain is HTH-type transcriptional repressor GlaR, found in Escherichia coli (strain K12).